The primary structure comprises 375 residues: Phytanoyl-CoA hydroxylase-interacting protein-like (375 aa).

S11, S12, and S15 each carry phosphoserine. Residue N22 is glycosylated (N-linked (GlcNAc...) asparagine). Phosphoserine is present on S24. Residue N36 is glycosylated (N-linked (GlcNAc...) asparagine). The region spanning V51–Y160 is the Fibronectin type-III domain.

This sequence belongs to the PHYHIP family.

May play a role in the development of the central system. The protein is Phytanoyl-CoA hydroxylase-interacting protein-like (Phyhipl) of Rattus norvegicus (Rat).